Consider the following 208-residue polypeptide: MADLGAEDKLKQICDALRIETLKPAEDEADAIVRNAKEQAKRIIDEAQERAAQIIASAKEEADFKLRQGESALAQAGKRSLESLKQAVENKVFKESLAEWLDNALADPEVSAKLVAALIQAIEDKGISGDLTAYIGKHVATRTVNEFLGKTILAKLRGKGVAVGSFVGGVQLKVEDKNWVLDLSSDTLLDLLMRYLQKDFREMIFQGS.

It belongs to the V-ATPase E subunit family.

Produces ATP from ADP in the presence of a proton gradient across the membrane. In Chlamydia felis (strain Fe/C-56) (Chlamydophila felis), this protein is V-type ATP synthase subunit E.